Consider the following 319-residue polypeptide: Acetyl-coenzyme A carboxylase carboxyl transferase subunit alpha (319 aa).

The CoA carboxyltransferase C-terminal domain maps to Asn-32–Thr-293.

This sequence belongs to the AccA family. Acetyl-CoA carboxylase is a heterohexamer composed of biotin carboxyl carrier protein (AccB), biotin carboxylase (AccC) and two subunits each of ACCase subunit alpha (AccA) and ACCase subunit beta (AccD).

The protein localises to the cytoplasm. It carries out the reaction N(6)-carboxybiotinyl-L-lysyl-[protein] + acetyl-CoA = N(6)-biotinyl-L-lysyl-[protein] + malonyl-CoA. It participates in lipid metabolism; malonyl-CoA biosynthesis; malonyl-CoA from acetyl-CoA: step 1/1. In terms of biological role, component of the acetyl coenzyme A carboxylase (ACC) complex. First, biotin carboxylase catalyzes the carboxylation of biotin on its carrier protein (BCCP) and then the CO(2) group is transferred by the carboxyltransferase to acetyl-CoA to form malonyl-CoA. The chain is Acetyl-coenzyme A carboxylase carboxyl transferase subunit alpha from Thioalkalivibrio sulfidiphilus (strain HL-EbGR7).